We begin with the raw amino-acid sequence, 342 residues long: MLFWGTPSYAVPTLDALNDSGYEIVGVVSQPDRRRGRGNQQMASPVKQRAMDQGLRLFTPERIRDEGDIQAELKSLKADISVVVAFGQLLPSTVLNQPPLGCWNGHASLLPRWRGAGPIQWSLLSGDSVTGVGIMAMEEGLDTGPVLVQERVAIGLLENANQLSNRLSSITAKLFLESMPRIAAAGPGIESERWKQLEVIKQEEIEGDPTYARMLSKKDHILDWNQSAMDLHRRVMGLYPNAFSSWNNKRLKVQATEPLDEELKSKLSEEVRPLLGRWQDGEHEPGKILACESDLGLVVSTKTCPLLIRQGQLEGKSKALGEVLIQQLQATVGQGLGVGFNI.

A (6S)-5,6,7,8-tetrahydrofolate-binding site is contributed by 108–111; it reads SLLP.

Belongs to the Fmt family.

It catalyses the reaction L-methionyl-tRNA(fMet) + (6R)-10-formyltetrahydrofolate = N-formyl-L-methionyl-tRNA(fMet) + (6S)-5,6,7,8-tetrahydrofolate + H(+). In terms of biological role, attaches a formyl group to the free amino group of methionyl-tRNA(fMet). The formyl group appears to play a dual role in the initiator identity of N-formylmethionyl-tRNA by promoting its recognition by IF2 and preventing the misappropriation of this tRNA by the elongation apparatus. The protein is Methionyl-tRNA formyltransferase of Prochlorococcus marinus (strain MIT 9313).